The chain runs to 105 residues: Antimicrobial peptide 1 (105 aa).

A signal peptide spans M1–A26. Intrachain disulfides connect C37–C93, C47–C105, and C49–C77.

Detected at higher levels in needles and twigs from canker-resistant seedlings than in needles from canker-susceptible plants. During summer, detected on cankered, healthy and marginal bark. During winter, detected at lower levels in cankered bark and bark from the canker margin than in healthy bark (at protein level).

Its subcellular location is the secreted. It localises to the cell wall. Its function is as follows. Antimicrobial peptide. This Pinus monticola (Western white pine) protein is Antimicrobial peptide 1.